Here is a 485-residue protein sequence, read N- to C-terminus: Glycogen synthase (485 aa).

Lys15 serves as a coordination point for ADP-alpha-D-glucose.

The protein belongs to the glycosyltransferase 1 family. Bacterial/plant glycogen synthase subfamily.

The catalysed reaction is [(1-&gt;4)-alpha-D-glucosyl](n) + ADP-alpha-D-glucose = [(1-&gt;4)-alpha-D-glucosyl](n+1) + ADP + H(+). The protein operates within glycan biosynthesis; glycogen biosynthesis. In terms of biological role, synthesizes alpha-1,4-glucan chains using ADP-glucose. In Geobacillus thermodenitrificans (strain NG80-2), this protein is Glycogen synthase.